Here is a 518-residue protein sequence, read N- to C-terminus: Cytochrome P450 1A1 (518 aa).

Residues 33 to 44 (SKPRVPKGLKRL) form a mitochondrial targeting signal region. O-linked (GlcNAc) serine glycosylation is present at S71. A substrate-binding site is contributed by F228. Heme is bound at residue C461.

The protein belongs to the cytochrome P450 family. In terms of assembly, interacts with cytosolic chaperones HSP70 and HSP90; this interaction is required for initial targeting to mitochondria. Interacts (via mitochondrial targeting signal) with TOMM40 (via N-terminus); this interaction is required for translocation across the mitochondrial outer membrane. Requires heme as cofactor.

The protein resides in the endoplasmic reticulum membrane. The protein localises to the mitochondrion inner membrane. Its subcellular location is the microsome membrane. It is found in the cytoplasm. It catalyses the reaction an organic molecule + reduced [NADPH--hemoprotein reductase] + O2 = an alcohol + oxidized [NADPH--hemoprotein reductase] + H2O + H(+). The enzyme catalyses estrone + reduced [NADPH--hemoprotein reductase] + O2 = 2-hydroxyestrone + oxidized [NADPH--hemoprotein reductase] + H2O + H(+). The catalysed reaction is estrone + reduced [NADPH--hemoprotein reductase] + O2 = 4-hydroxyestrone + oxidized [NADPH--hemoprotein reductase] + H2O + H(+). It carries out the reaction estrone + reduced [NADPH--hemoprotein reductase] + O2 = 6alpha-hydroxyestrone + oxidized [NADPH--hemoprotein reductase] + H2O + H(+). It catalyses the reaction estrone + reduced [NADPH--hemoprotein reductase] + O2 = 15alpha-hydroxyestrone + oxidized [NADPH--hemoprotein reductase] + H2O + H(+). The enzyme catalyses estrone + reduced [NADPH--hemoprotein reductase] + O2 = 16alpha-hydroxyestrone + oxidized [NADPH--hemoprotein reductase] + H2O + H(+). The catalysed reaction is 17beta-estradiol + reduced [NADPH--hemoprotein reductase] + O2 = 2-hydroxy-17beta-estradiol + oxidized [NADPH--hemoprotein reductase] + H2O + H(+). It carries out the reaction 17beta-estradiol + reduced [NADPH--hemoprotein reductase] + O2 = 4-hydroxy-17beta-estradiol + oxidized [NADPH--hemoprotein reductase] + H2O + H(+). It catalyses the reaction 17beta-estradiol + reduced [NADPH--hemoprotein reductase] + O2 = 6alpha-hydroxy-17beta-estradiol + oxidized [NADPH--hemoprotein reductase] + H2O + H(+). The enzyme catalyses 17beta-estradiol + reduced [NADPH--hemoprotein reductase] + O2 = 7alpha-hydroxy-17beta-estradiol + oxidized [NADPH--hemoprotein reductase] + H2O + H(+). The catalysed reaction is 17beta-estradiol + reduced [NADPH--hemoprotein reductase] + O2 = 15alpha-hydroxy-17beta-estradiol + oxidized [NADPH--hemoprotein reductase] + H2O + H(+). It carries out the reaction (5Z,8Z,11Z)-eicosatrienoate + reduced [NADPH--hemoprotein reductase] + O2 = 19-hydroxy-(5Z,8Z,11Z)-eicosatrienoate + oxidized [NADPH--hemoprotein reductase] + H2O + H(+). It catalyses the reaction (5Z,8Z,11Z,14Z)-eicosatetraenoate + reduced [NADPH--hemoprotein reductase] + O2 = 16-hydroxy-(5Z,8Z,11Z,14Z)-eicosatetraenoate + oxidized [NADPH--hemoprotein reductase] + H2O + H(+). The enzyme catalyses (5Z,8Z,11Z,14Z)-eicosatetraenoate + reduced [NADPH--hemoprotein reductase] + O2 = 17-hydroxy-(5Z,8Z,11Z,14Z)-eicosatetraenoate + oxidized [NADPH--hemoprotein reductase] + H2O + H(+). The catalysed reaction is (5Z,8Z,11Z,14Z)-eicosatetraenoate + reduced [NADPH--hemoprotein reductase] + O2 = 18-hydroxy-(5Z,8Z,11Z,14Z)-eicosatetraenoate + oxidized [NADPH--hemoprotein reductase] + H2O + H(+). It carries out the reaction (5Z,8Z,11Z,14Z)-eicosatetraenoate + reduced [NADPH--hemoprotein reductase] + O2 = 19-hydroxy-(5Z,8Z,11Z,14Z)-eicosatetraenoate + oxidized [NADPH--hemoprotein reductase] + H2O + H(+). It catalyses the reaction (5Z,8Z,11Z,14Z,17Z)-eicosapentaenoate + reduced [NADPH--hemoprotein reductase] + O2 = 19-hydroxy-(5Z,8Z,11Z,14Z,17Z)-eicosapentaenoate + oxidized [NADPH--hemoprotein reductase] + H2O + H(+). The enzyme catalyses (5Z,8Z,11Z,14Z)-eicosatetraenoate + reduced [NADPH--hemoprotein reductase] + O2 = (8R,9S)-epoxy-(5Z,11Z,14Z)-eicosatrienoate + oxidized [NADPH--hemoprotein reductase] + H2O + H(+). The catalysed reaction is (5Z,8Z,11Z,14Z)-eicosatetraenoate + reduced [NADPH--hemoprotein reductase] + O2 = (11R,12S)-epoxy-(5Z,8Z,14Z)-eicosatrienoate + oxidized [NADPH--hemoprotein reductase] + H2O + H(+). It carries out the reaction (5Z,8Z,11Z,14Z)-eicosatetraenoate + reduced [NADPH--hemoprotein reductase] + O2 = (14S,15R)-epoxy-(5Z,8Z,11Z)-eicosatrienoate + oxidized [NADPH--hemoprotein reductase] + H2O + H(+). It catalyses the reaction (5Z,8Z,11Z,14Z)-eicosatetraenoate + reduced [NADPH--hemoprotein reductase] + O2 = (14R,15S)-epoxy-(5Z,8Z,11Z)-eicosatrienoate + oxidized [NADPH--hemoprotein reductase] + H2O + H(+). The enzyme catalyses (5Z,8Z,11Z,14Z,17Z)-eicosapentaenoate + reduced [NADPH--hemoprotein reductase] + O2 = (17R,18S)-epoxy-(5Z,8Z,11Z,14Z)-eicosatetraenoate + oxidized [NADPH--hemoprotein reductase] + H2O + H(+). The catalysed reaction is (4Z,7Z,10Z,13Z,16Z,19Z)-docosahexaenoate + reduced [NADPH--hemoprotein reductase] + O2 = (19S,20R)-epoxy-(4Z,7Z,10Z,13Z,16Z)-docosapentaenoate + oxidized [NADPH--hemoprotein reductase] + H2O + H(+). It carries out the reaction (4Z,7Z,10Z,13Z,16Z,19Z)-docosahexaenoate + reduced [NADPH--hemoprotein reductase] + O2 = (19R,20S)-epoxy-(4Z,7Z,10Z,13Z,16Z)-docosapentaenoate + oxidized [NADPH--hemoprotein reductase] + H2O + H(+). It catalyses the reaction all-trans-retinol + reduced [NADPH--hemoprotein reductase] + O2 = all-trans-retinal + oxidized [NADPH--hemoprotein reductase] + 2 H2O + H(+). The enzyme catalyses all-trans-retinal + reduced [NADPH--hemoprotein reductase] + O2 = all-trans-retinoate + oxidized [NADPH--hemoprotein reductase] + H2O + 2 H(+). The catalysed reaction is (13S)-hydroperoxy-(9Z,11E)-octadecadienoate = 13-oxo-(9Z,11E)-octadecadienoate + H2O. It carries out the reaction (12S)-hydroperoxy-(5Z,8Z,10E,14Z)-eicosatetraenoate = 12-oxo-(5Z,8Z,10E,14Z)-eicosatetraenoate + H2O. It catalyses the reaction (15S)-hydroperoxy-(5Z,8Z,11Z,13E)-eicosatetraenoate = 15-oxo-(5Z,8Z,11Z,13E)-eicosatetraenoate + H2O. The enzyme catalyses (5S)-hydroperoxy-(6E,8Z,11Z,14Z)-eicosatetraenoate = 5-oxo-(6E,8Z,11Z,14Z)-eicosatetraenoate + H2O. It functions in the pathway steroid hormone biosynthesis. Its pathway is lipid metabolism; fatty acid metabolism. It participates in cofactor metabolism; retinol metabolism. Functionally, a cytochrome P450 monooxygenase involved in the metabolism of various endogenous substrates, including fatty acids, steroid hormones and vitamins. Mechanistically, uses molecular oxygen inserting one oxygen atom into a substrate, and reducing the second into a water molecule, with two electrons provided by NADPH via cytochrome P450 reductase (CPR; NADPH-ferrihemoprotein reductase). Catalyzes the hydroxylation of carbon-hydrogen bonds. Exhibits high catalytic activity for the formation of hydroxyestrogens from estrone (E1) and 17beta-estradiol (E2), namely 2-hydroxy E1 and E2, as well as D-ring hydroxylated E1 and E2 at the C15alpha and C16alpha positions. Displays different regioselectivities for polyunsaturated fatty acids (PUFA) hydroxylation. Catalyzes the epoxidation of double bonds of certain PUFA. Converts arachidonic acid toward epoxyeicosatrienoic acid (EET) regioisomers, 8,9-, 11,12-, and 14,15-EET, that function as lipid mediators in the vascular system. Displays an absolute stereoselectivity in the epoxidation of eicosapentaenoic acid (EPA) producing the 17(R),18(S) enantiomer. May play an important role in all-trans retinoic acid biosynthesis in extrahepatic tissues. Catalyzes two successive oxidative transformation of all-trans retinol to all-trans retinal and then to the active form all-trans retinoic acid. May also participate in eicosanoids metabolism by converting hydroperoxide species into oxo metabolites (lipoxygenase-like reaction, NADPH-independent). The polypeptide is Cytochrome P450 1A1 (CYP1A1) (Oryctolagus cuniculus (Rabbit)).